Here is a 92-residue protein sequence, read N- to C-terminus: uncharacterized protein (92 aa).

An N-terminal signal peptide occupies residues 1–23 (MNPAIVVIIVLLVAALLIWACKA).

This is an uncharacterized protein from Acheta domesticus (House cricket).